We begin with the raw amino-acid sequence, 345 residues long: Methionine import ATP-binding protein MetN 4 (345 aa).

Positions 2 to 241 (IELTNITKTF…PQLRTTKRFV (240 aa)) constitute an ABC transporter domain. 38-45 (GYSGAGKS) is a binding site for ATP.

This sequence belongs to the ABC transporter superfamily. Methionine importer (TC 3.A.1.24) family. As to quaternary structure, the complex is composed of two ATP-binding proteins (MetN), two transmembrane proteins (MetI) and a solute-binding protein (MetQ).

Its subcellular location is the cell membrane. The enzyme catalyses L-methionine(out) + ATP + H2O = L-methionine(in) + ADP + phosphate + H(+). It catalyses the reaction D-methionine(out) + ATP + H2O = D-methionine(in) + ADP + phosphate + H(+). In terms of biological role, part of the ABC transporter complex MetNIQ involved in methionine import. Responsible for energy coupling to the transport system. The chain is Methionine import ATP-binding protein MetN 4 from Oceanobacillus iheyensis (strain DSM 14371 / CIP 107618 / JCM 11309 / KCTC 3954 / HTE831).